Reading from the N-terminus, the 490-residue chain is Cytochrome P450 2C7 (490 aa).

Arg144 bears the Dimethylated arginine mark. Residue Cys435 coordinates heme.

It belongs to the cytochrome P450 family. The cofactor is heme.

The protein localises to the endoplasmic reticulum membrane. Its subcellular location is the microsome membrane. It catalyses the reaction an organic molecule + reduced [NADPH--hemoprotein reductase] + O2 = an alcohol + oxidized [NADPH--hemoprotein reductase] + H2O + H(+). In terms of biological role, cytochromes P450 are a group of heme-thiolate monooxygenases. In liver microsomes, this enzyme is involved in an NADPH-dependent electron transport pathway. It oxidizes a variety of structurally unrelated compounds, including steroids, fatty acids, and xenobiotics. The chain is Cytochrome P450 2C7 (Cyp2c7) from Rattus norvegicus (Rat).